Here is an 804-residue protein sequence, read N- to C-terminus: Protein translocase subunit SecA (804 aa).

ATP-binding positions include glutamine 100, 118 to 122, and aspartate 508; that span reads GEGKT.

This sequence belongs to the SecA family. In terms of assembly, monomer and homodimer. Part of the essential Sec protein translocation apparatus which comprises SecA, SecYEG and auxiliary proteins SecDF. Other proteins may also be involved.

Its subcellular location is the cell membrane. The protein resides in the cytoplasm. It catalyses the reaction ATP + H2O + cellular proteinSide 1 = ADP + phosphate + cellular proteinSide 2.. Functionally, part of the Sec protein translocase complex. Interacts with the SecYEG preprotein conducting channel. Has a central role in coupling the hydrolysis of ATP to the transfer of proteins into and across the cell membrane, serving as an ATP-driven molecular motor driving the stepwise translocation of polypeptide chains across the membrane. The chain is Protein translocase subunit SecA from Leuconostoc citreum (strain KM20).